A 175-amino-acid chain; its full sequence is Coagulogen (175 aa).

8 disulfide bridges follow: Cys8–Cys167, Cys10–Cys95, Cys60–Cys161, Cys65–Cys121, Cys75–Cys168, Cys88–Cys140, Cys127–Cys170, and Cys134–Cys172.

This sequence belongs to the coagulin family. Coagulogen is cleaved after Arg-18 and Arg-46 by a clotting enzyme contained in the hemocyte and activated by a bacterial endotoxin (lipopolysaccharide). This cleavage releases the peptide C and leaves 2 chains of coagulin, A and B, linked by two disulfide bonds. Coagulin molecules interlink to form a gel. In terms of tissue distribution, hemolymph.

It localises to the secreted. In terms of biological role, coagulogen is a gel-forming protein of hemolymph; it hinders the spread of invaders by immobilizing them. The polypeptide is Coagulogen (Carcinoscorpius rotundicauda (Mangrove horseshoe crab)).